We begin with the raw amino-acid sequence, 102 residues long: Small ribosomal subunit protein uS10 (102 aa).

Belongs to the universal ribosomal protein uS10 family. In terms of assembly, part of the 30S ribosomal subunit.

In terms of biological role, involved in the binding of tRNA to the ribosomes. This chain is Small ribosomal subunit protein uS10, found in Finegoldia magna (strain ATCC 29328 / DSM 20472 / WAL 2508) (Peptostreptococcus magnus).